The following is a 466-amino-acid chain: D-inositol 3-phosphate glycosyltransferase (466 aa).

The span at 1–12 shows a compositional bias: low complexity; that stretch reads MRPMRAGAGAAG. Residues 1–22 form a disordered region; that stretch reads MRPMRAGAGAAGESCKDDGVRP. Histidine 43 contacts 1D-myo-inositol 3-phosphate. UDP-N-acetyl-alpha-D-glucosamine-binding positions include 49–50 and glycine 57; that span reads QP. 1D-myo-inositol 3-phosphate contacts are provided by residues 54–59, lysine 112, tyrosine 145, threonine 169, and arginine 189; that span reads DAGGMN. Arginine 263, lysine 268, and glutamine 321 together coordinate UDP-N-acetyl-alpha-D-glucosamine. The Mg(2+) site is built by phenylalanine 330, histidine 331, and valine 333. Residues glutamate 343 and glutamate 351 each coordinate UDP-N-acetyl-alpha-D-glucosamine. Threonine 357 serves as a coordination point for Mg(2+). Residues 446–466 form a disordered region; the sequence is VRDPVAARKPRRWTARRGVGA.

The protein belongs to the glycosyltransferase group 1 family. MshA subfamily. In terms of assembly, homodimer.

It carries out the reaction 1D-myo-inositol 3-phosphate + UDP-N-acetyl-alpha-D-glucosamine = 1D-myo-inositol 2-acetamido-2-deoxy-alpha-D-glucopyranoside 3-phosphate + UDP + H(+). In terms of biological role, catalyzes the transfer of a N-acetyl-glucosamine moiety to 1D-myo-inositol 3-phosphate to produce 1D-myo-inositol 2-acetamido-2-deoxy-glucopyranoside 3-phosphate in the mycothiol biosynthesis pathway. The sequence is that of D-inositol 3-phosphate glycosyltransferase from Mycobacterium marinum (strain ATCC BAA-535 / M).